We begin with the raw amino-acid sequence, 210 residues long: 3-hexulose-6-phosphate synthase (210 aa).

Belongs to the HPS/KGPDC family. HPS subfamily.

The catalysed reaction is D-ribulose 5-phosphate + formaldehyde = D-arabino-hex-3-ulose 6-phosphate. Its pathway is one-carbon metabolism; formaldehyde assimilation via RuMP pathway; D-fructose 6-phosphate from D-ribulose 5-phosphate and formaldehyde: step 1/2. Functionally, catalyzes the condensation of ribulose 5-phosphate with formaldehyde to form 3-hexulose 6-phosphate. The protein is 3-hexulose-6-phosphate synthase of Staphylococcus aureus (strain USA300).